Here is a 154-residue protein sequence, read N- to C-terminus: Transcriptional repressor NrdR (154 aa).

A zinc finger spans residues 3–34 (CPYCQSEDTQVKDSRPAEDGAAIRRRRACPVC). An ATP-cone domain is found at 49–139 (LVVVKRTGRK…VYRNFREAKD (91 aa)).

It belongs to the NrdR family. Zn(2+) serves as cofactor.

In terms of biological role, negatively regulates transcription of bacterial ribonucleotide reductase nrd genes and operons by binding to NrdR-boxes. In Chelativorans sp. (strain BNC1), this protein is Transcriptional repressor NrdR.